Consider the following 83-residue polypeptide: Cytochrome b559 subunit alpha (83 aa).

Residues valine 21–tryptophan 35 traverse the membrane as a helical segment. Histidine 23 contacts heme.

Belongs to the PsbE/PsbF family. Heterodimer of an alpha subunit and a beta subunit. PSII is composed of 1 copy each of membrane proteins PsbA, PsbB, PsbC, PsbD, PsbE, PsbF, PsbH, PsbI, PsbJ, PsbK, PsbL, PsbM, PsbT, PsbX, PsbY, PsbZ, Psb30/Ycf12, at least 3 peripheral proteins of the oxygen-evolving complex and a large number of cofactors. It forms dimeric complexes. Requires heme b as cofactor.

Its subcellular location is the plastid. It localises to the chloroplast thylakoid membrane. Functionally, this b-type cytochrome is tightly associated with the reaction center of photosystem II (PSII). PSII is a light-driven water:plastoquinone oxidoreductase that uses light energy to abstract electrons from H(2)O, generating O(2) and a proton gradient subsequently used for ATP formation. It consists of a core antenna complex that captures photons, and an electron transfer chain that converts photonic excitation into a charge separation. The protein is Cytochrome b559 subunit alpha of Citrus sinensis (Sweet orange).